The primary structure comprises 221 residues: Glutathione S-transferase U25 (221 aa).

A2 carries the post-translational modification N-acetylalanine. A GST N-terminal domain is found at D3–T82. Residues S13–M14, N39–K40, K53–I54, and E66–S67 contribute to the glutathione site. One can recognise a GST C-terminal domain in the interval D88 to F208. At T149 the chain carries Phosphothreonine.

This sequence belongs to the GST superfamily. Tau family.

The protein resides in the cytoplasm. It is found in the cytosol. It catalyses the reaction RX + glutathione = an S-substituted glutathione + a halide anion + H(+). May be involved in the conjugation of reduced glutathione to a wide number of exogenous and endogenous hydrophobic electrophiles and have a detoxification role against certain herbicides. The polypeptide is Glutathione S-transferase U25 (GSTU25) (Arabidopsis thaliana (Mouse-ear cress)).